Consider the following 434-residue polypeptide: Methylenetetrahydrofolate--tRNA-(uracil-5-)-methyltransferase TrmFO (434 aa).

9-14 (GAGLAG) serves as a coordination point for FAD.

This sequence belongs to the MnmG family. TrmFO subfamily. Requires FAD as cofactor.

Its subcellular location is the cytoplasm. The catalysed reaction is uridine(54) in tRNA + (6R)-5,10-methylene-5,6,7,8-tetrahydrofolate + NADH + H(+) = 5-methyluridine(54) in tRNA + (6S)-5,6,7,8-tetrahydrofolate + NAD(+). The enzyme catalyses uridine(54) in tRNA + (6R)-5,10-methylene-5,6,7,8-tetrahydrofolate + NADPH + H(+) = 5-methyluridine(54) in tRNA + (6S)-5,6,7,8-tetrahydrofolate + NADP(+). In terms of biological role, catalyzes the folate-dependent formation of 5-methyl-uridine at position 54 (M-5-U54) in all tRNAs. The polypeptide is Methylenetetrahydrofolate--tRNA-(uracil-5-)-methyltransferase TrmFO (Listeria monocytogenes serotype 4b (strain F2365)).